A 256-amino-acid polypeptide reads, in one-letter code: Pro-opiomelanocortin (256 aa).

The N-terminal stretch at 1 to 26 is a signal peptide; the sequence is MPRSCYSRSGTLLLALLLQISMEVRG. C28 and C50 are joined by a disulfide. Residue T71 is glycosylated (O-linked (GalNAc...) threonine). A Phenylalanine amide modification is found at F87. Residues 88-120 are disordered; the sequence is GRGNSSGASQKREEEAAAADPGFHGDGVEPGLR. N91 is a glycosylation site (N-linked (GlcNAc...) asparagine). A propeptide spanning residues 100–122 is cleaved from the precursor; the sequence is EEEAAAADPGFHGDGVEPGLRED. An N-acetylserine; in Corticotropin modification is found at S125. Residue V137 is modified to Valine amide. Residue S155 is modified to Phosphoserine.

This sequence belongs to the POMC family. Specific enzymatic cleavages at paired basic residues yield the different active peptides. As to expression, ACTH and MSH are produced by the pituitary gland.

Its subcellular location is the secreted. In terms of biological role, ACTH stimulates the adrenal glands to release cortisol. MSH (melanocyte-stimulating hormone) increases the pigmentation of skin by increasing melanin production in melanocytes. Functionally, beta-endorphin and Met-enkephalin are endogenous opiates. Its function is as follows. Stimulates the adrenal glands to release cortisol. In terms of biological role, anorexigenic peptide. Increases the pigmentation of skin by increasing melanin production in melanocytes. Increases the pigmentation of skin by increasing melanin production in melanocytes. Functionally, endogenous orexigenic opiate. Its function is as follows. Endogenous opiate. This Cavia porcellus (Guinea pig) protein is Pro-opiomelanocortin (POMC).